The primary structure comprises 201 residues: LexA repressor (201 aa).

The segment at residues 29–49 is a DNA-binding region (H-T-H motif); the sequence is VREICKAVGLSSTSSVHFHLK. Catalysis depends on for autocatalytic cleavage activity residues Ser-125 and Lys-162.

It belongs to the peptidase S24 family. As to quaternary structure, homodimer.

The catalysed reaction is Hydrolysis of Ala-|-Gly bond in repressor LexA.. Represses a number of genes involved in the response to DNA damage (SOS response), including recA and lexA. In the presence of single-stranded DNA, RecA interacts with LexA causing an autocatalytic cleavage which disrupts the DNA-binding part of LexA, leading to derepression of the SOS regulon and eventually DNA repair. The polypeptide is LexA repressor (Clostridium botulinum (strain ATCC 19397 / Type A)).